The primary structure comprises 262 residues: MIFVLDVGNTNAVLGVFEEGKLCQHWRMETDRHKTEDEYGMLIKQLLEHEGLSFGDIKGIIVSSVVPPIMFALERMCEKYFKIKPLVVGPGIKTGLNIKYENPREVGADRIVNAVAGIQLYGSPLIIVDFGTATTYCYINEEKHYMGGVITPGIMISAEALYSRAAKLPRIEITKPSSIVGKNTVSAMQAGILYGYVGQVEGIVKRMKEEAKQEPTVIATGGLAKLIAEESNVIDIVDPFLTLKGLYMLYERNAILQHEKGE.

Position 6–13 (6–13) interacts with ATP; it reads DVGNTNAV. Substrate contacts are provided by residues Tyr100 and 107-110; that span reads GADR. Catalysis depends on Asp109, which acts as the Proton acceptor. Asp129 is a binding site for K(+). An ATP-binding site is contributed by Thr132. Position 184 (Thr184) interacts with substrate.

It belongs to the type III pantothenate kinase family. In terms of assembly, homodimer. The cofactor is NH4(+). It depends on K(+) as a cofactor.

It is found in the cytoplasm. It catalyses the reaction (R)-pantothenate + ATP = (R)-4'-phosphopantothenate + ADP + H(+). The protein operates within cofactor biosynthesis; coenzyme A biosynthesis; CoA from (R)-pantothenate: step 1/5. Its function is as follows. Catalyzes the phosphorylation of pantothenate (Pan), the first step in CoA biosynthesis. This Bacillus cytotoxicus (strain DSM 22905 / CIP 110041 / 391-98 / NVH 391-98) protein is Type III pantothenate kinase.